Reading from the N-terminus, the 452-residue chain is Phosphoglucosamine mutase (452 aa).

The active-site Phosphoserine intermediate is the Ser97. Mg(2+) contacts are provided by Ser97, Asp236, Asp238, and Asp240. The residue at position 97 (Ser97) is a Phosphoserine.

This sequence belongs to the phosphohexose mutase family. Mg(2+) is required as a cofactor. Activated by phosphorylation.

The enzyme catalyses alpha-D-glucosamine 1-phosphate = D-glucosamine 6-phosphate. Catalyzes the conversion of glucosamine-6-phosphate to glucosamine-1-phosphate. The chain is Phosphoglucosamine mutase from Prochlorococcus marinus (strain MIT 9515).